The following is a 226-amino-acid chain: Purine nucleoside phosphorylase Cj1217c (226 aa).

Zn(2+) contacts are provided by His58, Cys93, and His109.

This sequence belongs to the purine nucleoside phosphorylase YfiH/LACC1 family. In terms of assembly, homodimer. Requires Cu(2+) as cofactor. The cofactor is Zn(2+).

The enzyme catalyses adenosine + phosphate = alpha-D-ribose 1-phosphate + adenine. The catalysed reaction is S-methyl-5'-thioadenosine + phosphate = 5-(methylsulfanyl)-alpha-D-ribose 1-phosphate + adenine. It catalyses the reaction inosine + phosphate = alpha-D-ribose 1-phosphate + hypoxanthine. It carries out the reaction adenosine + H2O + H(+) = inosine + NH4(+). Its function is as follows. Purine nucleoside enzyme that catalyzes the phosphorolysis of adenosine and inosine nucleosides, yielding D-ribose 1-phosphate and the respective free bases, adenine and hypoxanthine. Also catalyzes the phosphorolysis of S-methyl-5'-thioadenosine into adenine and S-methyl-5-thio-alpha-D-ribose 1-phosphate. Also has adenosine deaminase activity. The chain is Purine nucleoside phosphorylase Cj1217c from Campylobacter jejuni subsp. jejuni serotype O:2 (strain ATCC 700819 / NCTC 11168).